Here is a 222-residue protein sequence, read N- to C-terminus: GTP cyclohydrolase 1 (222 aa).

Zn(2+) contacts are provided by Cys-111, His-114, and Cys-182.

It belongs to the GTP cyclohydrolase I family. In terms of assembly, homomer.

The catalysed reaction is GTP + H2O = 7,8-dihydroneopterin 3'-triphosphate + formate + H(+). Its pathway is cofactor biosynthesis; 7,8-dihydroneopterin triphosphate biosynthesis; 7,8-dihydroneopterin triphosphate from GTP: step 1/1. This chain is GTP cyclohydrolase 1, found in Klebsiella pneumoniae (strain 342).